The chain runs to 1024 residues: SAC3 family protein 1 (1024 aa).

The segment at 1–62 (MEKRNETGNN…QDSRQKRFSS (62 aa)) is disordered. A compositionally biased stretch (basic residues) spans 11-21 (RLKRSNNRGKS). A compositionally biased stretch (basic and acidic residues) spans 22–38 (KKDWKDASVETTPRETS). Over residues 39–52 (VDEDNTSVFEDVEA) the composition is skewed to acidic residues. The region spanning 243 to 433 (EVEQLRKGIL…NKTAFFNDSK (191 aa)) is the PCI domain. The residue at position 841 (Ser841) is a Phosphoserine. The stretch at 945–1022 (AQLEELEVVR…ARDLLKKVET (78 aa)) forms a coiled coil.

Belongs to the SAC3 family.

It localises to the cytoplasm. The protein resides in the nucleus envelope. This chain is SAC3 family protein 1, found in Schizosaccharomyces pombe (strain 972 / ATCC 24843) (Fission yeast).